The following is a 471-amino-acid chain: Pancreatic lipase-related protein 2 (471 aa).

Residues 1–17 (MLPSWTIGLLLLATVRG) form the signal peptide. A disulfide bridge connects residues cysteine 21 and cysteine 27. Residue asparagine 71 is glycosylated (N-linked (GlcNAc...) asparagine). A required for galactolipase activity region spans residues 93–105 (IHGFIDKGEDSWP). Cysteines 109 and 120 form a disulfide. Catalysis depends on serine 171, which acts as the Nucleophile. Residue aspartate 195 is the Charge relay system of the active site. The Ca(2+) site is built by glutamate 206, arginine 209, aspartate 211, and aspartate 214. A disulfide bond links cysteine 256 and cysteine 280. Positions 257–279 (QKNTLSTIVDVDGIWEGIEDFAA) are required for galactolipase activity. The active-site Charge relay system is histidine 282. 2 disulfide bridges follow: cysteine 304–cysteine 317 and cysteine 320–cysteine 325. A glycan (N-linked (GlcNAc...) asparagine) is linked at asparagine 355. In terms of domain architecture, PLAT spans 359-471 (WRYRVSVTLA…ENILQTLNPC (113 aa)). Cysteines 455 and 471 form a disulfide.

The protein belongs to the AB hydrolase superfamily. Lipase family.

The protein localises to the secreted. The protein resides in the zymogen granule membrane. It is found in the cell projection. It localises to the neuron projection. The catalysed reaction is a triacylglycerol + H2O = a diacylglycerol + a fatty acid + H(+). It catalyses the reaction a 1,2-diacyl-3-O-(beta-D-galactosyl)-sn-glycerol + 2 H2O = 3-beta-D-galactosyl-sn-glycerol + 2 a fatty acid + 2 H(+). It carries out the reaction 1,2,3-tri-(9Z-octadecenoyl)-glycerol + H2O = di-(9Z)-octadecenoylglycerol + (9Z)-octadecenoate + H(+). The enzyme catalyses di-(9Z)-octadecenoylglycerol + H2O = (9Z-octadecenoyl)-glycerol + (9Z)-octadecenoate + H(+). The catalysed reaction is (9Z-octadecenoyl)-glycerol + H2O = glycerol + (9Z)-octadecenoate + H(+). It catalyses the reaction 1-(9Z-octadecenoyl)-glycerol + H2O = glycerol + (9Z)-octadecenoate + H(+). It carries out the reaction 1,2,3-tripropanoylglycerol + H2O = dipropanoylglycerol + propanoate + H(+). The enzyme catalyses 1,2,3-tributanoylglycerol + H2O = dibutanoylglycerol + butanoate + H(+). The catalysed reaction is 1,2,3-trioctanoylglycerol + H2O = dioctanoylglycerol + octanoate + H(+). It catalyses the reaction 1,2-didecanoylglycerol + H2O = decanoylglycerol + decanoate + H(+). It carries out the reaction long chain 1,2-diacyl-3-O-beta-D-galactosyl-sn-glycerol + H2O = long chain acyl-3-O-beta-D-galactosyl-sn-glycerol + a fatty acid + H(+). The enzyme catalyses 1,2-dioctanoyl-3-O-beta-D-galactosyl-sn-glycerol + H2O = octanoyl-3-(beta-D-galactosyl)-sn-glycerol + octanoate + H(+). The catalysed reaction is 1,2-didodecanoyl-3-beta-D-galactosyl-sn-glycerol + H2O = dodecanoyl-3-beta-D-galactosyl-sn-glycerol + dodecanoate + H(+). It catalyses the reaction 1-beta-D-galactosyl-2,3-didodecanoyl-sn-glycerol + H2O = 1-beta-D-galactosyl-dodecanoyl-sn-glycerol + dodecanoate + H(+). It carries out the reaction a 1,2-diacyl-3-O-[alpha-D-galactosyl-(1-&gt;6)-beta-D-galactosyl]-sn-glycerol + H2O = acyl-3-O-[alpha-D-galactosyl-(1-&gt;6)-beta-D-galactosyl]-sn-glycerol + a fatty acid + H(+). The enzyme catalyses long chain 1,2-diacyl-3-O-[alpha-D-galactosyl-(1-&gt;6)-beta-D-galactosyl]-sn-glycerol + H2O = long chain acyl-3-O-[alpha-D-galactosyl-(1-&gt;6)-beta-D-galactosyl]-sn-glycerol + a fatty acid + H(+). The catalysed reaction is 1,2-dioctanoyl-3-O-[alpha-D-galactosyl-(1-&gt;6)-beta-D-galactosyl]-sn-glycerol + H2O = octanoyl-3-O-[alpha-D-galactosyl-(1-&gt;6)-beta-D-galactosyl]-sn-glycerol + octanoate + H(+). It catalyses the reaction 1,2-didodecanoyl-3-O-[alpha-D-galactosyl-(1-&gt;6)-beta-D-galactosyl]-sn-glycerol + H2O = dodecanoyl-3-O-[alpha-D-galactosyl-(1-&gt;6)-beta-D-galactosyl]-sn-glycerol + dodecanoate + H(+). It carries out the reaction a 1,2-diacyl-sn-glycero-3-phosphocholine + H2O = a monoacyl-sn-glycero-3-phosphocholine + a fatty acid + H(+). It functions in the pathway glycerolipid metabolism; triacylglycerol degradation. It participates in glycolipid metabolism. With respect to regulation, up-regulated by CLPS in the presence of increasing concentrations of bile salts. Lipase that primarily hydrolyzes triglycerides and galactosylglycerides. In neonates, may play a major role in pancreatic digestion of dietary fats such as milk fat globules enriched in long-chain triglycerides. Hydrolyzes short-, medium- and long-chain fatty acyls in triglycerides without apparent positional specificity. Can completely deacylate triacylglycerols. When the liver matures and bile salt synthesis increases, likely functions mainly as a galactolipase and monoacylglycerol lipase. Hydrolyzes monogalactosyldiglycerols (MGDG) and digalactosyldiacylglycerols (DGDG) present in a plant-based diet, releasing long-chain polyunsaturated fatty acids. Hydrolyzes medium- and long-chain fatty acyls in galactolipids. May act together with LIPF to hydrolyze partially digested triglycerides. Hydrolyzes long-chain monoglycerides with high efficiency. In cytotoxic T cells, contributes to perforin-dependent cell lysis, but is unlikely to mediate direct cytotoxicity. Also has low phospholipase activity. In neurons, required for the localization of the phospholipid 1-oleoyl-2-palmitoyl-PC (OPPC) to neurite tips through acyl chain remodeling of membrane phospholipids. The resulting OPPC-rich lipid membrane domain recruits the t-SNARE protein STX4 by selectively interacting with the STX4 transmembrane domain and this promotes surface expression of the dopamine transporter SLC6A3/DAT at neurite tips by facilitating fusion of SLC6A3-containing transport vesicles with the plasma membrane. The protein is Pancreatic lipase-related protein 2 (PNLIPRP2) of Sus scrofa (Pig).